A 123-amino-acid polypeptide reads, in one-letter code: Large ribosomal subunit protein bL12 (123 aa).

Belongs to the bacterial ribosomal protein bL12 family. Homodimer. Part of the ribosomal stalk of the 50S ribosomal subunit. Forms a multimeric L10(L12)X complex, where L10 forms an elongated spine to which 2 to 4 L12 dimers bind in a sequential fashion. Binds GTP-bound translation factors.

Functionally, forms part of the ribosomal stalk which helps the ribosome interact with GTP-bound translation factors. Is thus essential for accurate translation. This chain is Large ribosomal subunit protein bL12, found in Psychrobacter arcticus (strain DSM 17307 / VKM B-2377 / 273-4).